A 316-amino-acid polypeptide reads, in one-letter code: Ferrochelatase (316 aa).

Fe cation-binding residues include His190 and Glu271.

It belongs to the ferrochelatase family.

The protein localises to the cytoplasm. The enzyme catalyses heme b + 2 H(+) = protoporphyrin IX + Fe(2+). It participates in porphyrin-containing compound metabolism; protoheme biosynthesis; protoheme from protoporphyrin-IX: step 1/1. Catalyzes the ferrous insertion into protoporphyrin IX. The sequence is that of Ferrochelatase from Sulfurimonas denitrificans (strain ATCC 33889 / DSM 1251) (Thiomicrospira denitrificans (strain ATCC 33889 / DSM 1251)).